The sequence spans 356 residues: GDSL esterase/lipase At5g37690 (356 aa).

The N-terminal stretch at 1-18 (MMILRLALAIVISTYATA) is a signal peptide. The active-site Nucleophile is the Ser34. N-linked (GlcNAc...) asparagine glycosylation is found at Asn116 and Asn291. Catalysis depends on residues Asp322 and His325.

Belongs to the 'GDSL' lipolytic enzyme family.

The protein resides in the secreted. The polypeptide is GDSL esterase/lipase At5g37690 (Arabidopsis thaliana (Mouse-ear cress)).